The primary structure comprises 1444 residues: DNA polymerase III PolC-type (1444 aa).

The tract at residues Glu196 to Leu218 is disordered. Positions Glu207–Ala216 are enriched in polar residues. In terms of domain architecture, Exonuclease spans Tyr428–Ala584.

It belongs to the DNA polymerase type-C family. PolC subfamily.

The protein localises to the cytoplasm. The enzyme catalyses DNA(n) + a 2'-deoxyribonucleoside 5'-triphosphate = DNA(n+1) + diphosphate. Required for replicative DNA synthesis. This DNA polymerase also exhibits 3' to 5' exonuclease activity. This chain is DNA polymerase III PolC-type, found in Listeria welshimeri serovar 6b (strain ATCC 35897 / DSM 20650 / CCUG 15529 / CIP 8149 / NCTC 11857 / SLCC 5334 / V8).